The sequence spans 331 residues: Aflatoxin B1 aldehyde reductase member 4 (331 aa).

Asp-44 is a binding site for NADP(+). Residue Tyr-49 is the Proton donor of the active site. Ser-85 is subject to Phosphoserine. Residue His-113 participates in substrate binding. Residues 143–144, Gln-169, 198–208, and Arg-222 each bind NADP(+); these read SN and NPLAGGLLTGK. Substrate is bound at residue Tyr-232. 290–298 contacts NADP(+); that stretch reads SSLEQLEQN.

Belongs to the aldo/keto reductase family. Aldo/keto reductase 2 subfamily. Mainly expressed in uterus.

Its function is as follows. Can reduce the dialdehyde protein-binding form of aflatoxin B1 (AFB1) to the non-binding AFB1 dialcohol. May be involved in protection of liver against the toxic and carcinogenic effects of AFB1, a potent hepatocarcinogen. The sequence is that of Aflatoxin B1 aldehyde reductase member 4 (AKR7L) from Homo sapiens (Human).